Here is a 1348-residue protein sequence, read N- to C-terminus: ABC multidrug transporter atrD (1348 aa).

The segment covering 1-10 has biased composition (polar residues); the sequence is MSPLETNPLS. The disordered stretch occupies residues 1 to 67; that stretch reads MSPLETNPLS…HRPKSSSSNN (67 aa). Residues 20-31 are compositionally biased toward low complexity; that stretch reads ETSTTEEQASTP. Asn99 is a glycosylation site (N-linked (GlcNAc...) asparagine). Helical transmembrane passes span 114–134, 168–188, 240–260, and 268–288; these read ILIM…LPLF, YFVY…VGFI, KVGL…IAYV, and ICSS…QFII. The ABC transmembrane type-1 1 domain occupies 118-408; that stretch reads VISTICAIAA…VSPNAQAFTN (291 aa). Asn314 is a glycosylation site (N-linked (GlcNAc...) asparagine). 2 helical membrane-spanning segments follow: residues 344–364 and 371–391; these read IVMG…YGLG and FLVD…AILI. Residues 443–688 form the ABC transporter 1 domain; the sequence is IELRNVKHIY…GGAYRKLVEA (246 aa). 478-485 serves as a coordination point for ATP; it reads GPSGSGKS. Asn550 carries an N-linked (GlcNAc...) asparagine glycan. 2 consecutive transmembrane segments (helical) span residues 778–798 and 825–845; these read MLIG…QAVL and LMFF…GAAF. One can recognise an ABC transmembrane type-1 2 domain in the interval 779–1068; that stretch reads LIGLVFSVLA…VFSFAPDMGK (290 aa). N-linked (GlcNAc...) asparagine glycosylation occurs at Asn877. 4 helical membrane-spanning segments follow: residues 892-912, 925-947, 1015-1035, and 1042-1062; these read HLSG…TTLG, LALV…FYML, ALVF…LGHH, and FFVC…VFSF. A glycan (N-linked (GlcNAc...) asparagine) is linked at Asn1088. Residues 1103-1341 form the ABC transporter 2 domain; that stretch reads IEFRNVHFRY…KGRYYELVNL (239 aa). 1138-1145 lines the ATP pocket; the sequence is GPSGCGKS.

Belongs to the ABC transporter superfamily. ABCB family. Multidrug resistance exporter (TC 3.A.1.201) subfamily.

It is found in the cell membrane. Its activity is regulated as follows. Fenamirol efflux transporter activity is inhibited by the cyclosporin derivative PSC 833, nigericin, reserpine and valinomycin. The effect of reserpine is transiant, while that of the cyclosporin derivative PSC 833, nigericin and valinomycin is proportional to the time of exposure. Cyclohexinmide has inhibitory effect only when applied prior to addition of the fungicide. Functionally, pleiotropic ABC efflux transporter involved in the protection of the cells against a wide range of toxic compounds. Confers resistance to the azole fenarimol via efflux transport. May also be involved in the secretion of penicillin. In Emericella nidulans (Aspergillus nidulans), this protein is ABC multidrug transporter atrD.